The following is a 276-amino-acid chain: UPF0328 protein ECU01_0090/ECU01_1520/ECU02_1550/ECU08_0020 (276 aa).

The segment at Met1–His24 is disordered.

It belongs to the UPF0328 family.

The protein is UPF0328 protein ECU01_0090/ECU01_1520/ECU02_1550/ECU08_0020 of Encephalitozoon cuniculi (strain GB-M1) (Microsporidian parasite).